A 21-amino-acid polypeptide reads, in one-letter code: Cutinase 2 (21 aa).

Belongs to the cutinase family.

Its subcellular location is the secreted. It catalyses the reaction cutin + H2O = cutin monomers.. Inhibited by diisopropyl fluorophosphate (DFP). In terms of biological role, catalyzes the hydrolysis of complex carboxylic polyesters found in the cell wall of plants. Degrades cutin, a macromolecule that forms the structure of the plant cuticle. Allows pathogenic fungi to penetrate through the cuticular barrier into the host plant during the initial stage of fungal infection. The protein is Cutinase 2 of Colletotrichum gloeosporioides (Anthracnose fungus).